We begin with the raw amino-acid sequence, 506 residues long: Trans-cinnamate 4-monooxygenase (506 aa).

Residues 3–23 (LLLLEKTLLALFIAATIAVTI) traverse the membrane as a helical segment. (E)-cinnamate-binding positions include 213-218 (RSRLAQ) and Ala307. Cys448 is a heme binding site.

Belongs to the cytochrome P450 family. Requires heme as cofactor.

The protein localises to the membrane. It carries out the reaction (E)-cinnamate + reduced [NADPH--hemoprotein reductase] + O2 = (E)-4-coumarate + oxidized [NADPH--hemoprotein reductase] + H2O + H(+). Its pathway is phenylpropanoid metabolism; trans-4-coumarate biosynthesis; trans-4-coumarate from trans-cinnamate: step 1/1. Functionally, catalyzes the first oxidative step of the phenylpropanoid pathway in higher plants by transforming trans-cinnamate into p-coumarate. The compounds formed by this pathway are essential components for lignification, pollination, and defense against ultraviolet light, predators and pathogens. This chain is Trans-cinnamate 4-monooxygenase (CYP73A3), found in Medicago sativa (Alfalfa).